The sequence spans 412 residues: Gamma-glutamyl phosphate reductase (412 aa).

Belongs to the gamma-glutamyl phosphate reductase family.

It localises to the cytoplasm. It catalyses the reaction L-glutamate 5-semialdehyde + phosphate + NADP(+) = L-glutamyl 5-phosphate + NADPH + H(+). Its pathway is amino-acid biosynthesis; L-proline biosynthesis; L-glutamate 5-semialdehyde from L-glutamate: step 2/2. Functionally, catalyzes the NADPH-dependent reduction of L-glutamate 5-phosphate into L-glutamate 5-semialdehyde and phosphate. The product spontaneously undergoes cyclization to form 1-pyrroline-5-carboxylate. In Bartonella bacilliformis (strain ATCC 35685 / KC583 / Herrer 020/F12,63), this protein is Gamma-glutamyl phosphate reductase.